The chain runs to 128 residues: Holo-[acyl-carrier-protein] synthase (128 aa).

Residues Asp8 and Glu58 each coordinate Mg(2+).

Belongs to the P-Pant transferase superfamily. AcpS family. It depends on Mg(2+) as a cofactor.

Its subcellular location is the cytoplasm. The enzyme catalyses apo-[ACP] + CoA = holo-[ACP] + adenosine 3',5'-bisphosphate + H(+). Functionally, transfers the 4'-phosphopantetheine moiety from coenzyme A to a Ser of acyl-carrier-protein. This Exiguobacterium sibiricum (strain DSM 17290 / CCUG 55495 / CIP 109462 / JCM 13490 / 255-15) protein is Holo-[acyl-carrier-protein] synthase.